Consider the following 237-residue polypeptide: Listeriolysin regulatory protein (237 aa).

The HTH crp-type domain occupies 137–212 (NGKLGSICGQ…NSCFYVQNLD (76 aa)).

Its function is as follows. Positively regulates expression of listeriolysin, of 1-phosphadidylinositol phosphodiesterase (PI-PLC) and other virulence factors. The polypeptide is Listeriolysin regulatory protein (prfA) (Listeria monocytogenes serovar 1/2a (strain ATCC BAA-679 / EGD-e)).